Consider the following 509-residue polypeptide: ATP synthase subunit alpha (509 aa).

Position 169 to 176 (169 to 176 (GDRKTGKT)) interacts with ATP.

This sequence belongs to the ATPase alpha/beta chains family. As to quaternary structure, F-type ATPases have 2 components, CF(1) - the catalytic core - and CF(0) - the membrane proton channel. CF(1) has five subunits: alpha(3), beta(3), gamma(1), delta(1), epsilon(1). CF(0) has three main subunits: a(1), b(2) and c(9-12). The alpha and beta chains form an alternating ring which encloses part of the gamma chain. CF(1) is attached to CF(0) by a central stalk formed by the gamma and epsilon chains, while a peripheral stalk is formed by the delta and b chains.

It localises to the cell membrane. The catalysed reaction is ATP + H2O + 4 H(+)(in) = ADP + phosphate + 5 H(+)(out). Functionally, produces ATP from ADP in the presence of a proton gradient across the membrane. The alpha chain is a regulatory subunit. In Lacticaseibacillus casei (strain BL23) (Lactobacillus casei), this protein is ATP synthase subunit alpha.